Consider the following 139-residue polypeptide: Peptide methionine sulfoxide reductase MsrB (139 aa).

Residues 8-130 form the MsrB domain; it reads EREWQRELSP…NSASLQLKTD (123 aa). 4 residues coordinate Zn(2+): C47, C50, C96, and C99. C119 functions as the Nucleophile in the catalytic mechanism.

It belongs to the MsrB Met sulfoxide reductase family. It depends on Zn(2+) as a cofactor.

It catalyses the reaction L-methionyl-[protein] + [thioredoxin]-disulfide + H2O = L-methionyl-(R)-S-oxide-[protein] + [thioredoxin]-dithiol. In Acinetobacter baylyi (strain ATCC 33305 / BD413 / ADP1), this protein is Peptide methionine sulfoxide reductase MsrB.